A 1529-amino-acid polypeptide reads, in one-letter code: DNA (cytosine-5)-methyltransferase 1B (1529 aa).

Disordered stretches follow at residues 1–56 (MVKS…RAAC) and 674–706 (DDEL…TRSR). Residues 21-35 (QKKDEDTTDKGKLDE) are compositionally biased toward basic and acidic residues. Over residues 674 to 694 (DDELEENEDEDAEEEAQIEEE) the composition is skewed to acidic residues. Residues 697–706 (SKTPPSTRSR) are compositionally biased toward polar residues. 2 BAH domains span residues 741-873 (LRIN…FSLP) and 910-1049 (ITYN…KQLP). One can recognise an SAM-dependent MTase C5-type domain in the interval 1093–1527 (LATLDIFAGC…RKLKEAVDAK (435 aa)). Cys1198 is an active-site residue.

Belongs to the class I-like SAM-binding methyltransferase superfamily. C5-methyltransferase family. In terms of tissue distribution, expressed in roots and inflorescences. Expressed in roots, panicles, anthers, pistils, endosperm and imbibed embryos. Expressed in tissues containing actively replicating and dividing cells, such as shoot and root meristems.

The protein localises to the nucleus. It carries out the reaction a 2'-deoxycytidine in DNA + S-adenosyl-L-methionine = a 5-methyl-2'-deoxycytidine in DNA + S-adenosyl-L-homocysteine + H(+). In terms of biological role, major CG methylase that methylates chromatin CpG residues and maintains DNA methylation. Plays a major role in genomic imprinting, regulation of embryogenesis and seed viability. Maintains DNA methylation at the FIE1 gene locus in the embryo. This is DNA (cytosine-5)-methyltransferase 1B (MET1B) from Oryza sativa subsp. japonica (Rice).